We begin with the raw amino-acid sequence, 265 residues long: Indole-3-glycerol phosphate synthase (265 aa).

The protein belongs to the TrpC family.

The catalysed reaction is 1-(2-carboxyphenylamino)-1-deoxy-D-ribulose 5-phosphate + H(+) = (1S,2R)-1-C-(indol-3-yl)glycerol 3-phosphate + CO2 + H2O. Its pathway is amino-acid biosynthesis; L-tryptophan biosynthesis; L-tryptophan from chorismate: step 4/5. The protein is Indole-3-glycerol phosphate synthase of Hyphomonas neptunium (strain ATCC 15444).